Reading from the N-terminus, the 124-residue chain is MELTSEEYEELRGLLGTPDIGNADTLKKAFLKACKVHHPDKGGNEEAMKRLLYLYNKAKIAASATTSQVWYFLIIGYISLKNKNIYLPKIFWLRFQNMAPHSGNSGGKNSIKALMSKICIVMRN.

Residues 10–96 (ELRGLLGTPD…LPKIFWLRFQ (87 aa)) enclose the J domain.

The protein resides in the host cytoplasm. It localises to the host nucleus. Promotes efficient viral genome replication by accelerating both G1 and S phase progression of the cell cycle. The protein is Small t antigen of Bos taurus (Bovine).